The following is a 67-amino-acid chain: Large ribosomal subunit protein uL29 (67 aa).

It belongs to the universal ribosomal protein uL29 family.

The polypeptide is Large ribosomal subunit protein uL29 (rpmC) (Thermus thermophilus).